The following is a 463-amino-acid chain: RuvB-like 2 (463 aa).

Ala2 is modified (N-acetylalanine). Residue Lys9 forms a Glycyl lysine isopeptide (Lys-Gly) (interchain with G-Cter in SUMO2) linkage. 77–84 (GQPGTGKT) contacts ATP. Ser437 carries the phosphoserine modification. Residues Lys444 and Lys456 each participate in a glycyl lysine isopeptide (Lys-Gly) (interchain with G-Cter in SUMO2) cross-link.

Belongs to the RuvB family. In terms of assembly, forms homohexameric rings. Can form a dodecamer with RUVBL1 made of two stacked hexameric rings; however, even though RUVBL1 and RUVBL2 are present in equimolar ratio, the oligomeric status of each hexamer is not known. Oligomerization may regulate binding to nucleic acids and conversely, binding to nucleic acids may affect the dodecameric assembly. Interaction of the complex with DHX34 results in conformational changes of the N-terminus of the RUVBL2 subunits, resulting in loss of nucleotide binding ability and ATP hydrolysis of the complex. Interacts with the transcriptional activation domain of MYC. Interacts with ATF2. Component of the RNA polymerase II holoenzyme complex. May also act to bridge the LEF1/TCF1-CTNNB1 complex and TBP. Component of the NuA4 histone acetyltransferase complex which contains the catalytic subunit KAT5/TIP60 and the subunits EP400, TRRAP/PAF400, BRD8/SMAP, EPC1, DMAP1/DNMAP1, RUVBL1/TIP49, RUVBL2, ING3, actin, ACTL6A/BAF53A, MORF4L1/MRG15, MORF4L2/MRGX, MRGBP, YEATS4/GAS41, VPS72/YL1 and MEAF6. The NuA4 complex interacts with MYC and the adenovirus E1A protein. RUVBL2 interacts with EP400. Component of a NuA4-related complex which contains EP400, TRRAP/PAF400, SRCAP, BRD8/SMAP, EPC1, DMAP1/DNMAP1, RUVBL1/TIP49, RUVBL2, actin, ACTL6A/BAF53A, VPS72 and YEATS4/GAS41. Interacts with NPAT. Component of the chromatin-remodeling INO80 complex; specifically part of a complex module associated with the helicase ATP-binding and the helicase C-terminal domain of INO80. Component of some MLL1/MLL complex, at least composed of the core components KMT2A/MLL1, ASH2L, HCFC1/HCF1, WDR5 and RBBP5, as well as the facultative components BACC1, CHD8, E2F6, HSP70, INO80C, KANSL1, LAS1L, MAX, MCRS1, MGA, MYST1/MOF, PELP1, PHF20, PRP31, RING2, RUVB1/TIP49A, RUVB2/TIP49B, SENP3, TAF1, TAF4, TAF6, TAF7, TAF9 and TEX10. Interacts with IGHMBP2. Interacts with TELO2. Interacts with HINT1. Component of a SWR1-like complex. Component of the R2TP complex composed at least of RUVBL1, RUVBL2, RPAP3 and PIHD1. Component of the PAQosome complex which is responsible for the biogenesis of several protein complexes and which consists of R2TP complex members RUVBL1, RUVBL2, RPAP3 and PIH1D1, URI complex members PFDN2, PFDN6, PDRG1, UXT and URI1 as well as ASDURF, POLR2E and DNAAF10/WDR92. Interacts with ITFG1. Interacts with ZMYND10. Interacts with WAC; WAC positively regulates MTOR activity by promoting the assembly of the TTT complex composed of TELO2, TTI1 and TTI2 and the RUVBL complex composed of RUVBL1 and RUVBL2 into the TTT-RUVBL complex which leads to the dimerization of the mTORC1 complex and its subsequent activation. Forms a complex with APPL1 and APPL2. Interacts with ZNHIT2 (via HIT-type zinc finger) in the presence of ATP or ADP; shows a stronger interaction in the presence of ADP. The RUVBL1/RUVBL2 complex interacts with ZNHIT1 (via HIT-type zinc finger), ZNHIT3 (via HIT-type zinc finger), ZNHIT6 (via HIT-type zinc finger) and DDX59/ZNHIT5 (via HIT-type zinc finger) in the presence of ADP. Interacts with NOPCHAP1; the interaction is direct and disrupted upon ATP binding. Interacts with SMG1. (Microbial infection) Interacts with Mumps L polymerase; this interaction regulates the viral transcription. As to expression, ubiquitously expressed. Highly expressed in testis and thymus.

It localises to the nucleus matrix. The protein localises to the nucleus. It is found in the nucleoplasm. Its subcellular location is the cytoplasm. The protein resides in the membrane. It localises to the dynein axonemal particle. It carries out the reaction ATP + H2O = ADP + phosphate + H(+). Possesses single-stranded DNA-stimulated ATPase and ATP-dependent DNA helicase (5' to 3') activity; hexamerization is thought to be critical for ATP hydrolysis and adjacent subunits in the ring-like structure contribute to the ATPase activity. Component of the NuA4 histone acetyltransferase complex which is involved in transcriptional activation of select genes principally by acetylation of nucleosomal histones H4 and H2A. This modification may both alter nucleosome -DNA interactions and promote interaction of the modified histones with other proteins which positively regulate transcription. This complex may be required for the activation of transcriptional programs associated with oncogene and proto-oncogene mediated growth induction, tumor suppressor mediated growth arrest and replicative senescence, apoptosis, and DNA repair. The NuA4 complex ATPase and helicase activities seem to be, at least in part, contributed by the association of RUVBL1 and RUVBL2 with EP400. NuA4 may also play a direct role in DNA repair when recruited to sites of DNA damage. Component of a SWR1-like complex that specifically mediates the removal of histone H2A.Z/H2AZ1 from the nucleosome. Proposed core component of the chromatin remodeling INO80 complex which exhibits DNA- and nucleosome-activated ATPase activity and catalyzes ATP-dependent nucleosome sliding. Plays an essential role in oncogenic transformation by MYC and also modulates transcriptional activation by the LEF1/TCF1-CTNNB1 complex. May also inhibit the transcriptional activity of ATF2. Involved in the endoplasmic reticulum (ER)-associated degradation (ERAD) pathway where it negatively regulates expression of ER stress response genes. May play a role in regulating the composition of the U5 snRNP complex. The polypeptide is RuvB-like 2 (RUVBL2) (Homo sapiens (Human)).